Reading from the N-terminus, the 1674-residue chain is Kinesin-like protein KIF21A (1674 aa).

N-acetylmethionine is present on M1. The Kinesin motor domain maps to 9 to 371 (SVRVAVRIRP…LKYANRARNI (363 aa)). 88 to 95 (GQTGAGKT) contributes to the ATP binding site. A coiled-coil region spans residues 365–575 (ANRARNIKNK…NREERSVAGK (211 aa)). A Phosphoserine modification is found at S524. Disordered stretches follow at residues 556–641 (KKRL…DEKA), 779–804 (EEQEKARLTESRRNREIAQLKKDQRK), and 841–881 (SDKV…AQQK). Positions 560–597 (QKLEESNREERSVAGKEDNTDTDQEKKEEKGVSERENN) are enriched in basic and acidic residues. Residues 598-637 (ELEVEESQEVSDHEDEEEEEEEEEDDIDGGESSDESDSES) are compositionally biased toward acidic residues. Polar residues predominate over residues 851 to 865 (KLSSSDAPAQDTGSS). Coiled coils occupy residues 931-1019 (TDII…AKEE) and 1053-1083 (LQAAQKEAQIKVLEGRLKQTEITSATQNQLL). Residues 1116–1138 (VEDSTDEDAPLNSPGSEGSTLSS) form a disordered region. The span at 1128–1138 (SPGSEGSTLSS) shows a compositional bias: polar residues. Residues 1146–1167 (EVKPKNKARRRTTTQMELLYAD) are interaction with KANK1 and KANK2. Composition is skewed to polar residues over residues 1170-1179 (ELASDTSTGD) and 1196-1205 (GMNTETSGTS). Residues 1170–1318 (ELASDTSTGD…SSLSEVHRSS (149 aa)) are disordered. S1212, S1225, S1229, and S1239 each carry phosphoserine. Over residues 1245–1262 (KAYEKAEKSKAKEQKHSD) the composition is skewed to basic and acidic residues. Residues 1288 to 1297 (NRLTVSQGNT) show a composition bias toward polar residues. WD repeat units follow at residues 1345-1382 (GHTKAVLCVDSTDDLLFTGSKDRTCKVWNLVTGQEIMS), 1385-1423 (GHPNNVVSVKYCNYTSLVFTVSTSYIKVWDIRDSAKCIR), 1449-1487 (SGENQINQIALNPTGTFLYAASGNAVRMWDLKRFQSTGK), 1490-1532 (GHLG…LGTV), 1541-1578 (PHYDGIEALTIQGDNLFSGSRDNGIKKWDLTQKDLLQQ), 1582-1621 (AHKDWVCALGVVPDHPVLLSGCRGGILKVWNMDTFMPVGE), and 1624-1661 (GHDSPINAICVNSTHIFTAADDRTVRIWKARNLQDGQI). S1662 carries the post-translational modification Phosphoserine. T1664 is modified (phosphothreonine). A Phosphoserine modification is found at S1673.

The protein belongs to the TRAFAC class myosin-kinesin ATPase superfamily. Kinesin family. As to quaternary structure, part of a cortical microtubule stabilization complex (CMSC) composed of KANK1, PPFIA1, PPFIBP1, ERC1/ELKS, PHLDB2/LL5beta, CLASPs, KIF21A and possibly additional interactors; within CMSCs KANK1 and PHLDB2/LL5beta seem to be the core components for recruiting microtubule-binding proteins KIF21A and CLASPs, whereas PPFIA1, PPFIBP1 and ERC1/ELKS serve as scaffolds for protein clustering. Interacts (via residues 1146-1167) with KANK1 (via ankyrin repeats 1-5) and KANK2 (via ankyrin repeats 1-5).

It localises to the cytoplasm. It is found in the cytoskeleton. The protein resides in the cell cortex. The protein localises to the cell projection. Its subcellular location is the axon. It localises to the dendrite. It is found in the growth cone. Processive microtubule plus-end directed motor protein involved in neuronal axon guidance. Is recruited by KANK1 to cortical microtubule stabilizing complexes (CMSCs) at focal adhesions (FAs) rims where it promotes microtubule capture and stability. Controls microtubule polymerization rate at axonal growth cones and suppresses microtubule growth without inducing microtubule disassembly once it reaches the cell cortex. The sequence is that of Kinesin-like protein KIF21A (KIF21A) from Homo sapiens (Human).